The following is a 513-amino-acid chain: HTH-type transcriptional regulatory protein TyrR (513 aa).

Positions R2–W72 constitute an ACT domain. The region spanning E78–G114 is the PAS domain. In terms of domain architecture, Sigma-54 factor interaction spans I206 to T428. ATP-binding positions include G234–D241 and A290–E299. A DNA-binding region (H-T-H motif) is located at residues S482–R502.

In terms of assembly, homodimer. In presence of tyrosine (or high concentrations of phenylalanine or tryptophan) and ATP, it self-associates to form an hexamer. At low tyrosine concentrations, homodimers can bind to certain recognition sequences referred to as 'strong TyrR boxes'. Homohexamers are the active repressing species, interacting with two or three tyrR boxes in the targeted regulatory DNA, including 'strong TyrR boxes' and lower-affinity sites called 'weak TyrR boxes'.

It localises to the cytoplasm. With respect to regulation, binding of ATP strongly enhances the affinity of TyrR for tyrosine. Dual transcriptional regulator of the TyrR regulon, which includes a number of genes coding for proteins involved in the biosynthesis or transport of the three aromatic amino acids, phenylalanine, tyrosine and tryptophan. These three aromatic amino acids act as effectors which bind to the TyrR protein to form an active regulatory protein. Modulates the expression of at least eight unlinked transcription units, including aroF, aroG, aroLM, aroP, mtr, tyrA, tyrB and tyrP. In most cases TyrR acts as a repressor, but positive effects have been observed on the tyrP gene, which is repressed in the presence of tyrosine and activated at high phenylalanine concentrations. Is also involved in activation, but not repression, of mtr expression in association with phenylalanine or tyrosine. Acts by binding specifically to TyrR boxes in the promoter region of the target genes. The protein is HTH-type transcriptional regulatory protein TyrR of Escherichia coli (strain K12).